Here is a 156-residue protein sequence, read N- to C-terminus: 6,7-dimethyl-8-ribityllumazine synthase (156 aa).

5-amino-6-(D-ribitylamino)uracil contacts are provided by residues Phe-25, 59-61 (AFE), and 83-85 (AVI). A (2S)-2-hydroxy-3-oxobutyl phosphate-binding site is contributed by 88–89 (AT). His-91 (proton donor) is an active-site residue. Position 116 (Phe-116) interacts with 5-amino-6-(D-ribitylamino)uracil. Arg-130 lines the (2S)-2-hydroxy-3-oxobutyl phosphate pocket.

The protein belongs to the DMRL synthase family.

It catalyses the reaction (2S)-2-hydroxy-3-oxobutyl phosphate + 5-amino-6-(D-ribitylamino)uracil = 6,7-dimethyl-8-(1-D-ribityl)lumazine + phosphate + 2 H2O + H(+). Its pathway is cofactor biosynthesis; riboflavin biosynthesis; riboflavin from 2-hydroxy-3-oxobutyl phosphate and 5-amino-6-(D-ribitylamino)uracil: step 1/2. Catalyzes the formation of 6,7-dimethyl-8-ribityllumazine by condensation of 5-amino-6-(D-ribitylamino)uracil with 3,4-dihydroxy-2-butanone 4-phosphate. This is the penultimate step in the biosynthesis of riboflavin. In Nitratidesulfovibrio vulgaris (strain DSM 19637 / Miyazaki F) (Desulfovibrio vulgaris), this protein is 6,7-dimethyl-8-ribityllumazine synthase.